Here is a 142-residue protein sequence, read N- to C-terminus: FAD synthase (142 aa).

ATP contacts are provided by residues 9 to 10 (TF), 14 to 17 (HPGH), and D92.

The protein belongs to the archaeal FAD synthase family. Homodimer. It depends on a divalent metal cation as a cofactor.

It carries out the reaction FMN + ATP + H(+) = FAD + diphosphate. Its pathway is cofactor biosynthesis; FAD biosynthesis; FAD from FMN: step 1/1. Its function is as follows. Catalyzes the transfer of the AMP portion of ATP to flavin mononucleotide (FMN) to produce flavin adenine dinucleotide (FAD) coenzyme. The sequence is that of FAD synthase from Halalkalicoccus jeotgali (strain DSM 18796 / CECT 7217 / JCM 14584 / KCTC 4019 / B3).